The sequence spans 352 residues: Molybdenum import ATP-binding protein ModC (352 aa).

An ABC transporter domain is found at 1 to 229 (MLELNFSQTL…SVMNPWLPKE (229 aa)). Position 31–38 (31–38 (GVSGAGKT)) interacts with ATP. Positions 289–352 (QTSIRNVLRA…AQIKSVSITA (64 aa)) constitute a Mop domain.

The protein belongs to the ABC transporter superfamily. Molybdate importer (TC 3.A.1.8) family. In terms of assembly, the complex is composed of two ATP-binding proteins (ModC), two transmembrane proteins (ModB) and a solute-binding protein (ModA).

The protein localises to the cell inner membrane. It catalyses the reaction molybdate(out) + ATP + H2O = molybdate(in) + ADP + phosphate + H(+). Functionally, part of the ABC transporter complex ModABC involved in molybdenum import. Responsible for energy coupling to the transport system. This is Molybdenum import ATP-binding protein ModC from Shigella flexneri.